A 381-amino-acid chain; its full sequence is Flap endonuclease 1 (381 aa).

The interval 1 to 105 (MGVKGLNQLI…GELEKRLLKR (105 aa)) is N-domain. A Mg(2+)-binding site is contributed by aspartate 34. The DNA site is built by arginine 47 and arginine 71. Mg(2+) contacts are provided by aspartate 87, glutamate 159, glutamate 161, aspartate 180, and aspartate 182. The segment at 123-254 (EVMKFEKRLV…VTAYKLIKEH (132 aa)) is I-domain. Glutamate 159 serves as a coordination point for DNA. DNA contacts are provided by glycine 232 and aspartate 234. Aspartate 234 is a binding site for Mg(2+). The interval 340–348 (VQGRLDGFF) is interaction with PCNA. The tract at residues 354 to 381 (PGAKAGDKKGDKKRGSDSKASNNKKKRK) is disordered. Basic and acidic residues predominate over residues 358–370 (AGDKKGDKKRGSD).

This sequence belongs to the XPG/RAD2 endonuclease family. FEN1 subfamily. As to quaternary structure, interacts with PCNA. Three molecules of FEN1 bind to one PCNA trimer with each molecule binding to one PCNA monomer. PCNA stimulates the nuclease activity without altering cleavage specificity. It depends on Mg(2+) as a cofactor. Phosphorylated. Phosphorylation upon DNA damage induces relocalization to the nuclear plasma.

The protein resides in the nucleus. Its subcellular location is the nucleolus. The protein localises to the nucleoplasm. It localises to the mitochondrion. Its function is as follows. Structure-specific nuclease with 5'-flap endonuclease and 5'-3' exonuclease activities involved in DNA replication and repair. During DNA replication, cleaves the 5'-overhanging flap structure that is generated by displacement synthesis when DNA polymerase encounters the 5'-end of a downstream Okazaki fragment. It enters the flap from the 5'-end and then tracks to cleave the flap base, leaving a nick for ligation. Also involved in the long patch base excision repair (LP-BER) pathway, by cleaving within the apurinic/apyrimidinic (AP) site-terminated flap. Acts as a genome stabilization factor that prevents flaps from equilibrating into structures that lead to duplications and deletions. Also possesses 5'-3' exonuclease activity on nicked or gapped double-stranded DNA, and exhibits RNase H activity. Also involved in replication and repair of rDNA and in repairing mitochondrial DNA. The chain is Flap endonuclease 1 from Scheffersomyces stipitis (strain ATCC 58785 / CBS 6054 / NBRC 10063 / NRRL Y-11545) (Yeast).